A 597-amino-acid polypeptide reads, in one-letter code: Apurinic-apyrimidinic endonuclease 1 (597 aa).

Residues 232 to 246 (YNNDTKYLSNPKGVT) show a composition bias toward polar residues. A disordered region spans residues 232–296 (YNNDTKYLSN…IPPIPKNTED (65 aa)). The segment covering 265 to 274 (NNNNNNNNNK) has biased composition (low complexity). His-380, His-420, Glu-456, Asp-490, His-493, His-527, Asp-540, His-542, and Glu-572 together coordinate Zn(2+). Position 493 (His-493) interacts with Mn(2+). 2 residues coordinate Mn(2+): Asp-540 and His-542.

This sequence belongs to the AP endonuclease 2 family. Zn(2+) is required as a cofactor. It depends on Mn(2+) as a cofactor. Post-translationally, may be proteolytically cleaved into a 59 kDa form.

The protein resides in the mitochondrion. With respect to regulation, apurinic/apyrimidinic (AP) endonuclease activity is enhanced with increasing concentrations of Mn(2+), while Zn(2+) initially enhances activity but subsequently inhibits activity in a concentration-dependent manner. Co(2+) inhibits apurinic/apyrimidinic (AP) endonuclease activity at concentrations greater than 2.5 mM. Its function is as follows. Plays a role in mitochondrial DNA base excision repair (BER) pathway induced by oxidative stress. Has apurinic/apyrimidinic (AP) endonuclease activity towards double-stranded DNA (dsDNA) with a preference for C as opposite base. Has 3'-phosphatase activity; removes 3'-phosphate from blunt-end, recessed, and gapped DNA templates and thus, removes 3'-blocks for DNA polymerase activity during BER. Lacks 3'-5' exonuclease activity and does not cleave damaged bases by nucleotide incision repair (NIR). The sequence is that of Apurinic-apyrimidinic endonuclease 1 from Plasmodium falciparum (isolate 3D7).